We begin with the raw amino-acid sequence, 73 residues long: Exodeoxyribonuclease 7 small subunit (73 aa).

This sequence belongs to the XseB family. In terms of assembly, heterooligomer composed of large and small subunits.

It localises to the cytoplasm. The catalysed reaction is Exonucleolytic cleavage in either 5'- to 3'- or 3'- to 5'-direction to yield nucleoside 5'-phosphates.. Functionally, bidirectionally degrades single-stranded DNA into large acid-insoluble oligonucleotides, which are then degraded further into small acid-soluble oligonucleotides. In Clostridium novyi (strain NT), this protein is Exodeoxyribonuclease 7 small subunit.